A 643-amino-acid chain; its full sequence is Threonine--tRNA ligase (643 aa).

One can recognise a TGS domain in the interval 1–65 (MIHITLPDGS…NKDMPLSIVT (65 aa)). Residues 246–537 (DHRKLGRELD…LIEQHAGAMP (292 aa)) are catalytic. Cys337, His388, and His514 together coordinate Zn(2+).

Belongs to the class-II aminoacyl-tRNA synthetase family. Homodimer. Zn(2+) serves as cofactor.

It localises to the cytoplasm. The catalysed reaction is tRNA(Thr) + L-threonine + ATP = L-threonyl-tRNA(Thr) + AMP + diphosphate + H(+). Functionally, catalyzes the attachment of threonine to tRNA(Thr) in a two-step reaction: L-threonine is first activated by ATP to form Thr-AMP and then transferred to the acceptor end of tRNA(Thr). Also edits incorrectly charged L-seryl-tRNA(Thr). This Delftia acidovorans (strain DSM 14801 / SPH-1) protein is Threonine--tRNA ligase.